The chain runs to 68 residues: UPF0253 protein VF_0662 (68 aa).

The protein belongs to the UPF0253 family.

The sequence is that of UPF0253 protein VF_0662 from Aliivibrio fischeri (strain ATCC 700601 / ES114) (Vibrio fischeri).